The primary structure comprises 175 residues: Colicin-B immunity protein (175 aa).

The next 3 helical transmembrane spans lie at 14–32 (ILYA…ILIL), 104–121 (CFWG…TLFY), and 149–168 (IYFT…LLVI).

It is found in the cell inner membrane. Its function is as follows. This protein is able to protect a cell, which harbors the plasmid ColB encoding colicin B, against colicin B. The polypeptide is Colicin-B immunity protein (cbi) (Escherichia coli).